The primary structure comprises 175 residues: Ribosome maturation factor RimM (175 aa).

The 80-residue stretch at 96–175 (EEDFYWRDLI…LIQVNWEPDF (80 aa)) folds into the PRC barrel domain.

This sequence belongs to the RimM family. As to quaternary structure, binds ribosomal protein uS19.

It localises to the cytoplasm. Its function is as follows. An accessory protein needed during the final step in the assembly of 30S ribosomal subunit, possibly for assembly of the head region. Essential for efficient processing of 16S rRNA. May be needed both before and after RbfA during the maturation of 16S rRNA. It has affinity for free ribosomal 30S subunits but not for 70S ribosomes. This chain is Ribosome maturation factor RimM, found in Psychromonas ingrahamii (strain DSM 17664 / CCUG 51855 / 37).